A 155-amino-acid polypeptide reads, in one-letter code: Large ribosomal subunit protein uL22c (155 aa).

Belongs to the universal ribosomal protein uL22 family. Part of the 50S ribosomal subunit.

It localises to the plastid. It is found in the chloroplast. In terms of biological role, this protein binds specifically to 23S rRNA. Its function is as follows. The globular domain of the protein is located near the polypeptide exit tunnel on the outside of the subunit, while an extended beta-hairpin is found that lines the wall of the exit tunnel in the center of the 70S ribosome. In Coffea arabica (Arabian coffee), this protein is Large ribosomal subunit protein uL22c (rpl22).